The following is a 706-amino-acid chain: Glycylpeptide N-tetradecanoyltransferase (706 aa).

Positions 1-119 (MSGIAGTSQD…LASGSSREGK (119 aa)) are disordered. Low complexity predominate over residues 7–42 (TSQDTSVAASASSSSTRPAAASSSIAPPSPSLTTAP). Residues 47 to 65 (EQDDDDDQENDDEEEEEEG) show a composition bias toward acidic residues. Basic residues predominate over residues 78–95 (KQRKKKKSKAAAKLRKKL). Tetradecanoyl-CoA is bound by residues 180–183 (HKFW), 317–319 (LCV), and 325–329 (SKRLA). The active-site Proton acceptor; via carboxylate is the Val706.

The protein belongs to the NMT family. As to quaternary structure, monomer.

Its subcellular location is the cytoplasm. The enzyme catalyses N-terminal glycyl-[protein] + tetradecanoyl-CoA = N-tetradecanoylglycyl-[protein] + CoA + H(+). Functionally, adds a myristoyl group to the N-terminal glycine residue of certain cellular proteins. The sequence is that of Glycylpeptide N-tetradecanoyltransferase (NMT1) from Mycosarcoma maydis (Corn smut fungus).